Consider the following 359-residue polypeptide: Beta-hexosaminidase (359 aa).

Substrate-binding positions include Asp-64, Arg-72, Arg-138, and 168 to 169; that span reads KH. His-181 (proton donor/acceptor) is an active-site residue. The active-site Nucleophile is the Asp-252.

The protein belongs to the glycosyl hydrolase 3 family. NagZ subfamily.

The protein resides in the cytoplasm. The catalysed reaction is Hydrolysis of terminal non-reducing N-acetyl-D-hexosamine residues in N-acetyl-beta-D-hexosaminides.. The protein operates within cell wall biogenesis; peptidoglycan recycling. In terms of biological role, plays a role in peptidoglycan recycling by cleaving the terminal beta-1,4-linked N-acetylglucosamine (GlcNAc) from peptide-linked peptidoglycan fragments, giving rise to free GlcNAc, anhydro-N-acetylmuramic acid and anhydro-N-acetylmuramic acid-linked peptides. In Thiobacillus denitrificans (strain ATCC 25259 / T1), this protein is Beta-hexosaminidase.